A 133-amino-acid polypeptide reads, in one-letter code: uncharacterized protein (133 aa).

It belongs to the ycf68 family.

The protein resides in the plastid. Its subcellular location is the chloroplast. This is an uncharacterized protein from Oryza sativa subsp. japonica (Rice).